We begin with the raw amino-acid sequence, 352 residues long: Cell division protein ZipA (352 aa).

Residues 1 to 5 are Periplasmic-facing; it reads MQELR. A helical membrane pass occupies residues 6–26; that stretch reads LVLIIVGALAISALLLHGLWT. Residues 27-352 lie on the Cytoplasmic side of the membrane; sequence SRKEKPAKFG…REKAKLYSQA (326 aa). Over residues 35 to 54 the composition is skewed to basic and acidic residues; sequence FGEKPLGKLDDSNRDTEGFD. The segment at 35–56 is disordered; that stretch reads FGEKPLGKLDDSNRDTEGFDHT.

Belongs to the ZipA family. Interacts with FtsZ via their C-terminal domains.

The protein localises to the cell inner membrane. Essential cell division protein that stabilizes the FtsZ protofilaments by cross-linking them and that serves as a cytoplasmic membrane anchor for the Z ring. Also required for the recruitment to the septal ring of downstream cell division proteins. The chain is Cell division protein ZipA from Photobacterium profundum (strain SS9).